A 131-amino-acid chain; its full sequence is Small ribosomal subunit protein uS8 (131 aa).

Belongs to the universal ribosomal protein uS8 family. Part of the 30S ribosomal subunit. Contacts proteins S5 and S12.

In terms of biological role, one of the primary rRNA binding proteins, it binds directly to 16S rRNA central domain where it helps coordinate assembly of the platform of the 30S subunit. This is Small ribosomal subunit protein uS8 from Clostridium novyi (strain NT).